Here is a 109-residue protein sequence, read N- to C-terminus: Small ribosomal subunit protein uS17A (109 aa).

It belongs to the universal ribosomal protein uS17 family. As to quaternary structure, part of the 30S ribosomal subunit.

One of the primary rRNA binding proteins, it binds specifically to the 5'-end of 16S ribosomal RNA. The polypeptide is Small ribosomal subunit protein uS17A (Methanosarcina acetivorans (strain ATCC 35395 / DSM 2834 / JCM 12185 / C2A)).